The primary structure comprises 109 residues: ATPase inhibitor mai-2, mitochondrial (109 aa).

Disordered regions lie at residues Phe18–Asp39 and Glu73–Glu109. The span at Gly21–Gly35 shows a compositional bias: gly residues. Residues Tyr55–Glu109 adopt a coiled-coil conformation.

This sequence belongs to the ATPase inhibitor family.

The protein localises to the mitochondrion. Thought to be a regulatory component of the ATP-synthesizing complex in the mitochondria. Activity is pH dependent. This is ATPase inhibitor mai-2, mitochondrial (mai-2) from Caenorhabditis elegans.